The primary structure comprises 201 residues: Small ribosomal subunit protein uS4 (201 aa).

Positions 91–154 (SRLDNVIYRA…QKMEWFEEAQ (64 aa)) constitute an S4 RNA-binding domain.

Belongs to the universal ribosomal protein uS4 family. Part of the 30S ribosomal subunit. Contacts protein S5. The interaction surface between S4 and S5 is involved in control of translational fidelity.

One of the primary rRNA binding proteins, it binds directly to 16S rRNA where it nucleates assembly of the body of the 30S subunit. In terms of biological role, with S5 and S12 plays an important role in translational accuracy. This chain is Small ribosomal subunit protein uS4, found in Corynebacterium aurimucosum (strain ATCC 700975 / DSM 44827 / CIP 107346 / CN-1) (Corynebacterium nigricans).